A 146-amino-acid chain; its full sequence is Leptin (146 aa).

C96 and C146 are oxidised to a cystine.

This sequence belongs to the leptin family.

It localises to the secreted. Its function is as follows. Key player in the regulation of energy balance and body weight control. Once released into the circulation, has central and peripheral effects by binding LEPR, found in many tissues, which results in the activation of several major signaling pathways. In the hypothalamus, acts as an appetite-regulating factor that induces a decrease in food intake and an increase in energy consumption by inducing anorexinogenic factors and suppressing orexigenic neuropeptides, also regulates bone mass and secretion of hypothalamo-pituitary-adrenal hormones. In the periphery, increases basal metabolism, influences reproductive function, regulates pancreatic beta-cell function and insulin secretion, is pro-angiogenic for endothelial cell and affects innate and adaptive immunity. In the arcuate nucleus of the hypothalamus, activates by depolarization POMC neurons inducing FOS and SOCS3 expression to release anorexigenic peptides and inhibits by hyperpolarization NPY neurons inducing SOCS3 with a consequent reduction on release of orexigenic peptides. In addition to its known satiety inducing effect, has a modulatory role in nutrient absorption. In the intestine, reduces glucose absorption by enterocytes by activating PKC and leading to a sequential activation of p38, PI3K and ERK signaling pathways which exerts an inhibitory effect on glucose absorption. Acts as a growth factor on certain tissues, through the activation of different signaling pathways increases expression of genes involved in cell cycle regulation such as CCND1, via JAK2-STAT3 pathway, or VEGFA, via MAPK1/3 and PI3K-AKT1 pathways. May also play an apoptotic role via JAK2-STAT3 pathway and up-regulation of BIRC5 expression. Pro-angiogenic, has mitogenic activity on vascular endothelial cells and plays a role in matrix remodeling by regulating the expression of matrix metalloproteinases (MMPs) and tissue inhibitors of metalloproteinases (TIMPs). In innate immunity, modulates the activity and function of neutrophils by increasing chemotaxis and the secretion of oxygen radicals. Increases phagocytosis by macrophages and enhances secretion of pro-inflammatory mediators. Increases cytotoxic ability of NK cells. Plays a pro-inflammatory role, in synergy with IL1B, by inducing NOS2 which promotes the production of IL6, IL8 and Prostaglandin E2, through a signaling pathway that involves JAK2, PI3K, MAP2K1/MEK1 and MAPK14/p38. In adaptive immunity, promotes the switch of memory T-cells towards T helper-1 cell immune responses. Increases CD4(+)CD25(-) T-cell proliferation and reduces autophagy during TCR (T-cell receptor) stimulation, through MTOR signaling pathway activation and BCL2 up-regulation. The chain is Leptin (LEP) from Gorilla gorilla gorilla (Western lowland gorilla).